Reading from the N-terminus, the 350-residue chain is tRNA dimethylallyltransferase (350 aa).

34–41 is an ATP binding site; sequence GPTASGKT. A substrate-binding site is contributed by 36–41; that stretch reads TASGKT. Interaction with substrate tRNA regions lie at residues 63-66, 187-191, and 274-279; these read DSAL, QRIQR, and RCVGYR.

This sequence belongs to the IPP transferase family. In terms of assembly, monomer. Mg(2+) is required as a cofactor.

The enzyme catalyses adenosine(37) in tRNA + dimethylallyl diphosphate = N(6)-dimethylallyladenosine(37) in tRNA + diphosphate. In terms of biological role, catalyzes the transfer of a dimethylallyl group onto the adenine at position 37 in tRNAs that read codons beginning with uridine, leading to the formation of N6-(dimethylallyl)adenosine (i(6)A). This is tRNA dimethylallyltransferase from Paracidovorax citrulli (strain AAC00-1) (Acidovorax citrulli).